Reading from the N-terminus, the 507-residue chain is MGRKKIQITRIMDERNRQVTFTKRKFGLMKKAYELSVLCDCEIALIIFNSSNKLFQYASTDMDKVLLKYTEYNEPHESGTNSDIVEALNKKEHRGCDSPDPDTSYVLTPHTEEKYKKINEEFDNMMRNHKIAPGLPPQNFSMSVTVPVTSPNALSYTNPGSSLVSPSLAASSTLADSSMLSPPQATLHRNVSPGAPQRPPSTGSAGGMLSTSDLTVPNGAGSSPVGNGFVNSRASPNLVGTTGANSLGKVMPTESPPPPGGGNLGMNSRKPDLRVVIPPSSKGMMPPLSEEEELELNTQRISSSQAPQPLATPVVSVTTPSLPQQGLVYSAMPTAYNTDYSLTSADLSALQGFNSPGMLSLGQVSAWQQHHLGQAALSSLVAGGQLSQGSNLSINTNQNINIKSEPISPPRDRMTPSGFQQQQPPPPSQAPQPQPPQPQPQPQPQARQEMGRSPVDSLSSSSSSYDGSDREDPRGDFHSPVVLGRPPNTEDRESPSVKRMRMDAWVT.

Residues 3–57 (RKKIQITRIMDERNRQVTFTKRKFGLMKKAYELSVLCDCEIALIIFNSSNKLFQY) enclose the MADS-box domain. The segment at residues 58-86 (ASTDMDKVLLKYTEYNEPHESGTNSDIVE) is a DNA-binding region (mef2-type). Ser59 carries the phosphoserine; by CK2 modification. Phosphoserine occurs at positions 98 and 235. The segment at 175-269 (ADSSMLSPPQ…GGGNLGMNSR (95 aa)) is disordered. Over residues 209–245 (LSTSDLTVPNGAGSSPVGNGFVNSRASPNLVGTTGAN) the composition is skewed to polar residues. N6-acetyllysine is present on Lys249. At Ser255 the chain carries Phosphoserine. The segment at 266-283 (MNSRKPDLRVVIPPSSKG) is required for interaction with MAPKs. The tract at residues 289–296 (SEEEELEL) is beta domain. Phosphothreonine; by MAPK7 and MAPK14 is present on residues Thr312 and Thr319. Ser355 carries the phosphoserine; by MAPK7 modification. Residues 390–402 (SNLSINTNQNINI) are compositionally biased toward polar residues. The interval 390–507 (SNLSINTNQN…KRMRMDAWVT (118 aa)) is disordered. Lys403 is modified (N6-acetyllysine; alternate). Lys403 participates in a covalent cross-link: Glycyl lysine isopeptide (Lys-Gly) (interchain with G-Cter in SUMO); alternate. At Ser408 the chain carries Phosphoserine; by CDK5. Phosphothreonine is present on Thr415. Residues 423–443 (QPPPPSQAPQPQPPQPQPQPQ) are compositionally biased toward pro residues. Ser453 is modified (phosphoserine). The segment covering 453 to 466 (SPVDSLSSSSSSYD) has biased composition (low complexity). Basic and acidic residues-rich tracts occupy residues 467–477 (GSDREDPRGDF) and 488–507 (NTED…AWVT).

This sequence belongs to the MEF2 family. Binds DNA as a homo- or heterodimer. Dimerizes with MEF2D. Interacts with HDAC7. Interacts with PIAS1; the interaction enhances sumoylation. Interacts with HDAC4, HDAC9 and SLC2A4RG. Interacts (via the N-terminal) with MAPK7; the interaction results in the phosphorylation and transcriptional activity of MEF2A. Constitutive phosphorylation on Ser-408 promotes Lys-403 sumoylation thus preventing acetylation at this site. Dephosphorylation on Ser-408 by PPP3CA upon neuron depolarization promotes a switch from sumoylation to acetylation on residue Lys-403 leading to inhibition of dendrite claw differentiation. Phosphorylation on Thr-312 and Thr-319 are the main sites involved in p38 MAPK signaling and activate transcription. Phosphorylated on these sites by MAPK14/p38alpha and MAPK11/p38beta, but not by MAPK13/p38delta nor by MAPK12/p38gamma. Phosphorylation on Ser-408 by CDK5 induced by neurotoxicity inhibits MEF2A transcriptional activation leading to apoptosis of cortical neurons. Phosphorylation on Thr-312, Thr-319 and Ser-355 can be induced by EGF. In terms of processing, sumoylation on Lys-403 is enhanced by PIAS1 and represses transcriptional activity. Phosphorylation on Ser-408 is required for sumoylation. Has no effect on nuclear location nor on DNA binding. Sumoylated with SUMO1 and, to a lesser extent with SUMO2 and SUMO3. PIASx facilitates sumoylation in postsynaptic dendrites in the cerebellar cortex and promotes their morphogenesis. Post-translationally, acetylation on Lys-403 activates transcriptional activity. Acetylated by p300 on several sites in diffentiating myocytes. Acetylation on Lys-4 increases DNA binding and transactivation. Hyperacetylation by p300 leads to enhanced cardiac myocyte growth and heart failure. Proteolytically cleaved on several sites by caspase 3 and caspase 7 following neurotoxicity. Preferentially cleaves the CDK5-mediated hyperphosphorylated form which leads to cortical neuron apoptosis and transcriptional inactivation.

It localises to the nucleus. In terms of biological role, transcriptional activator which binds specifically to the MEF2 element, 5'-YTA[AT](4)TAR-3', found in numerous muscle-specific genes. Also involved in the activation of numerous growth factor- and stress-induced genes. Mediates cellular functions not only in skeletal and cardiac muscle development, but also in neuronal differentiation and survival. Plays diverse roles in the control of cell growth, survival and apoptosis via p38 MAPK signaling in muscle-specific and/or growth factor-related transcription. In cerebellar granule neurons, phosphorylated and sumoylated MEF2A represses transcription of NUR77 promoting synaptic differentiation. Associates with chromatin to the ZNF16 promoter. This Sus scrofa (Pig) protein is Myocyte-specific enhancer factor 2A (MEF2A).